The chain runs to 133 residues: Small ribosomal subunit protein uS8 (133 aa).

This sequence belongs to the universal ribosomal protein uS8 family. As to quaternary structure, part of the 30S ribosomal subunit. Contacts proteins S5 and S12.

In terms of biological role, one of the primary rRNA binding proteins, it binds directly to 16S rRNA central domain where it helps coordinate assembly of the platform of the 30S subunit. The sequence is that of Small ribosomal subunit protein uS8 from Deinococcus deserti (strain DSM 17065 / CIP 109153 / LMG 22923 / VCD115).